We begin with the raw amino-acid sequence, 469 residues long: Tubulin gamma-2 chain (469 aa).

142-148 contributes to the GTP binding site; the sequence is AGGTGSG.

The protein belongs to the tubulin family.

It localises to the cytoplasm. Its subcellular location is the cytoskeleton. The protein resides in the microtubule organizing center. Its function is as follows. Tubulin is the major constituent of microtubules. The gamma chain is found at microtubule organizing centers (MTOC) such as the spindle poles, suggesting that it is involved in the minus-end nucleation of microtubule assembly. This chain is Tubulin gamma-2 chain (TUBG2), found in Zea mays (Maize).